The sequence spans 784 residues: Repetin (784 aa).

Residues 1–91 (MAQLLNSILS…VQACYHKLDN (91 aa)) are S-100-like. 2 EF-hand domains span residues 13-48 (DVFHKYAKGNGDCALLCKEELKQLLLAEFGDILQRP) and 49-84 (NDPETVETILNLLDQDRDGHIDFHEYLLLVFQLVQA). Glu-32, Asp-62, Asp-64, Asp-66, His-68, and Glu-73 together coordinate Ca(2+). Disordered regions lie at residues 92–221 (KSHG…QAKW), 282–584 (GCGQ…SHYI), 601–661 (TEGT…HQHK), and 677–784 (RDWQ…NHQR). A compositionally biased stretch (basic and acidic residues) spans 124–201 (RHEEERQNSH…FSFDQSERQS (78 aa)). 7 stretches are compositionally biased toward polar residues: residues 286 to 296 (TDRQGQSSHYG), 304 to 343 (SYHYGQTDRQGQSSHYSQTDRQGQSSHYSQPDRQGQSSHY), 356 to 392 (DQTNRQGQGSHYSQPNRQGQSSHYGQPDTQDQSSHYG), 400 to 486 (SSHY…QSSH), 504 to 584 (GQGQ…SHYI), 610 to 646 (VEQSGRSGRLSQQTPGQEGYQNQGQGFQSRDSQQNGH), and 680 to 695 (QSCSSEQGHRQAQTRQ). Basic and acidic residues-rich tracts occupy residues 704-722 (WAEEEQGHQTWDRHSHESQ) and 729-784 (QDRR…NHQR).

The protein belongs to the S100-fused protein family. In terms of processing, potential substrate of transglutaminase. Some arginines are probably converted to citrullines by peptidylarginine deimidase. As to expression, expression is scattered in the normal epidermis but strong in the acrosyringium, the inner hair root sheath and in the filiform papilli of the tongue.

Its subcellular location is the secreted. It localises to the extracellular space. It is found in the extracellular matrix. In terms of biological role, involved in the cornified cell envelope formation. Multifunctional epidermal matrix protein. Reversibly binds calcium. The protein is Repetin (RPTN) of Homo sapiens (Human).